The following is a 163-amino-acid chain: Cyanate hydratase (163 aa).

Active-site residues include arginine 103, glutamate 106, and serine 129.

The protein belongs to the cyanase family.

The enzyme catalyses cyanate + hydrogencarbonate + 3 H(+) = NH4(+) + 2 CO2. Catalyzes the reaction of cyanate with bicarbonate to produce ammonia and carbon dioxide. This Ajellomyces dermatitidis (strain ER-3 / ATCC MYA-2586) (Blastomyces dermatitidis) protein is Cyanate hydratase.